A 402-amino-acid polypeptide reads, in one-letter code: Zinc finger protein 322 (402 aa).

The C2H2-type 1; atypical zinc finger occupies 43–65 (YQCLECKQNFCENLALIMCERTH). C2H2-type zinc fingers lie at residues 71–93 (YKCDMCEKTFVQSSDLTSHQRIH), 99–121 (YKCSKCEKSFWHHLALSGHQRTH), 127–149 (YTCDICGKNFGQSSDLLVHQRSH), 155–177 (YLCSECDKCFSRSTNLIRHRRTH), 183–205 (FKCLECEKAFSGKSDLISHQRTH), 211–233 (YKCNKCEKSYRHRSAFIVHKRVH), 239–261 (YKCGACEKCFGQKSDLIVHQRVH), and 267–289 (YKCLECMRSFTRSANLIRHQATH). The C2H2-type 10; degenerate zinc-finger motif lies at 293–315 (FKCLEYEKSFNCSSDLIVHQRIH). Residues 351-373 (YKYTVCDKSFHQSSALLQHQTVH) form a C2H2-type 11; degenerate zinc finger. Position 391 is a phosphoserine (S391).

The protein belongs to the krueppel C2H2-type zinc-finger protein family. In terms of assembly, interacts with POU5F1. As to expression, ubiquitous. Highly expressed in heart and skeletal muscle.

It is found in the cytoplasm. The protein resides in the nucleus. Functionally, transcriptional activator. Important for maintenance of pluripotency in embryonic stem cells. Binds directly to the POU5F1 distal enhancer and the NANOG proximal promoter, and enhances expression of both genes. Can also bind to numerous other gene promoters and regulates expression of many other pluripotency factors, either directly or indirectly. Promotes inhibition of MAPK signaling during embryonic stem cell differentiation. The chain is Zinc finger protein 322 (ZNF322) from Homo sapiens (Human).